A 435-amino-acid polypeptide reads, in one-letter code: Putative BTB/POZ domain-containing protein L275 (435 aa).

The region spanning 80 to 149 (YDGYVYINVG…IKGKQNDNHN (70 aa)) is the BTB domain.

Belongs to the mimivirus BTB/WD family.

The polypeptide is Putative BTB/POZ domain-containing protein L275 (Acanthamoeba polyphaga mimivirus (APMV)).